Consider the following 420-residue polypeptide: Mannose-1-phosphate guanylyltransferase regulatory subunit alpha (420 aa).

A substrate-binding domain region spans residues 2-251; it reads LKAVILIGGP…DGIWSQIKSA (250 aa). Positions 85 and 247 each coordinate GDP-alpha-D-mannose. A hexapeptide repeat domain region spans residues 273 to 420; that stretch reads LAKHTPGGPR…SRSFTNQIIL (148 aa). Residues 356–384 form a C-loop region; the sequence is TPNDPNPNDPRAHMDSESLFKDGKLLPAI.

The protein belongs to the transferase hexapeptide repeat family. Component of the GMPPA-GMPPB mannose-1-phosphate guanylyltransferase complex composed of 4 GMPPA subunits and 8 GMPPB subunits; the complex is organized into three layers, a central layer made up of 2 GMPPA dimers sandwiched between two layers each made up of 2 GMPPB dimers. As to expression, expressed in the liver (at protein level).

It is found in the cytoplasm. Regulatory subunit of the GMPPA-GMPPB mannose-1-phosphate guanylyltransferase complex; reduces the catalytic activity of GMPPB when part of the complex. Mediates allosteric feedback inhibition of GMPPB catalytic activity upon binding GDP-alpha-D-mannose. Together with GMPPB regulates GDP-alpha-D-mannose levels. This chain is Mannose-1-phosphate guanylyltransferase regulatory subunit alpha (GMPPA), found in Sus scrofa (Pig).